The sequence spans 233 residues: Ribonuclease 3 (233 aa).

In terms of domain architecture, RNase III spans 7–136 (KQYLLSEFNI…FIGALYLDQG (130 aa)). Glutamate 49 contacts Mg(2+). Residue aspartate 53 is part of the active site. Residues aspartate 122 and glutamate 125 each coordinate Mg(2+). The active site involves glutamate 125. The DRBM domain occupies 162–232 (DFKSRLQEKL…ARAALKLLEE (71 aa)).

This sequence belongs to the ribonuclease III family. In terms of assembly, homodimer. Mg(2+) serves as cofactor.

The protein resides in the cytoplasm. The catalysed reaction is Endonucleolytic cleavage to 5'-phosphomonoester.. Digests double-stranded RNA. Involved in the processing of primary rRNA transcript to yield the immediate precursors to the large and small rRNAs (23S and 16S). Processes some mRNAs, and tRNAs when they are encoded in the rRNA operon. Processes pre-crRNA and tracrRNA of type II CRISPR loci if present in the organism. This chain is Ribonuclease 3, found in Leuconostoc citreum (strain KM20).